A 527-amino-acid polypeptide reads, in one-letter code: Baicalin-beta-D-glucuronidase (527 aa).

The signal sequence occupies residues 1–25 (MGFQVWQKGLCVLCFSLIFICGVIG). Glu-212 functions as the Proton donor in the catalytic mechanism. Catalysis depends on Glu-329, which acts as the Nucleophile.

It belongs to the glycosyl hydrolase 79 family. As to quaternary structure, homotetramer.

It carries out the reaction baicalin + H2O = baicalein + D-glucuronate + H(+). Its function is as follows. Beta-glucuronidase involved in the initiation of H(2)O(2) metabolism via the production of baicalein. Unable to use glycyrrhizin, gypsogenin-3-O-D-glucuronide, luteolin-7-O-D-glucoside and apigenin-7-O-D-glucoside as substrates. This Scutellaria baicalensis (Baical skullcap) protein is Baicalin-beta-D-glucuronidase (SGUS).